Consider the following 415-residue polypeptide: MAIKKRSATVVPGASGAAAAVKNLQASKSSFWGELPQHVMSGISRMVPTLIMGGVILAFSQLIAYSWLKIPAEIGIMDALNSGKFSGFDLSLLKFAWLSQSFGGVLFGFAIPMFAAFVANSIGGKLAFPAGFIGGLMSTQPTQLLNFDPSTMQWATSSPVPSTFIGALIISIVAGYLVKWMNQKIQLPDFLLAFKTTFLLPILSAIFVMLAMYYVITPFGGWINGGIRTVLTAAGEKGALMYAMGIAAATAIDLGGPINKAAGFVAFSFTTDHVLPVTARSIAIVIPPIGLGLATIIDRRLTGKRLFNAQLYPQGKTAMFLAFMGISEGAIPFALESPITAIPSYMVGAIVGSTAAVWLGAVQWFPESAIWAWPLVTNLGVYMAGIALGAIITALMVVFLRLMMFRKGKLLIDSL.

At 1–46 (MAIKKRSATVVPGASGAAAAVKNLQASKSSFWGELPQHVMSGISRM) the chain is on the cytoplasmic side. One can recognise a PTS EIIC type-2 domain in the interval 35-415 (LPQHVMSGIS…RKGKLLIDSL (381 aa)). The helical transmembrane segment at 47-67 (VPTLIMGGVILAFSQLIAYSW) threads the bilayer. The Periplasmic portion of the chain corresponds to 68-101 (LKIPAEIGIMDALNSGKFSGFDLSLLKFAWLSQS). A helical transmembrane segment spans residues 102–122 (FGGVLFGFAIPMFAAFVANSI). Residues 123 to 126 (GGKL) are Cytoplasmic-facing. The helical transmembrane segment at 127-147 (AFPAGFIGGLMSTQPTQLLNF) threads the bilayer. Residues 148–157 (DPSTMQWATS) lie on the Periplasmic side of the membrane. A helical transmembrane segment spans residues 158–178 (SPVPSTFIGALIISIVAGYLV). The Cytoplasmic portion of the chain corresponds to 179 to 197 (KWMNQKIQLPDFLLAFKTT). Residues 198–218 (FLLPILSAIFVMLAMYYVITP) form a helical membrane-spanning segment. Topologically, residues 219 to 237 (FGGWINGGIRTVLTAAGEK) are periplasmic. Residues 238–258 (GALMYAMGIAAATAIDLGGPI) form a helical membrane-spanning segment. Residues 259–276 (NKAAGFVAFSFTTDHVLP) are Cytoplasmic-facing. Residues 277–297 (VTARSIAIVIPPIGLGLATII) traverse the membrane as a helical segment. Residues 298–318 (DRRLTGKRLFNAQLYPQGKTA) lie on the Periplasmic side of the membrane. The helical transmembrane segment at 319-339 (MFLAFMGISEGAIPFALESPI) threads the bilayer. The Cytoplasmic segment spans residues 340–341 (TA). A helical transmembrane segment spans residues 342–362 (IPSYMVGAIVGSTAAVWLGAV). Residues 363–378 (QWFPESAIWAWPLVTN) lie on the Periplasmic side of the membrane. Residues 379-399 (LGVYMAGIALGAIITALMVVF) form a helical membrane-spanning segment. The Cytoplasmic segment spans residues 400 to 415 (LRLMMFRKGKLLIDSL).

The protein resides in the cell inner membrane. In terms of biological role, the phosphoenolpyruvate-dependent sugar phosphotransferase system (PTS), a major carbohydrate active -transport system, catalyzes the phosphorylation of incoming sugar substrates concomitant with their translocation across the cell membrane. The protein is Fructose-like permease IIC component (fryC) of Shigella flexneri.